The chain runs to 316 residues: Glutamyl-Q tRNA(Asp) synthetase (316 aa).

L-glutamate contacts are provided by residues 13 to 17 (RFAPS) and Asp49. The short motif at 16 to 26 (PSPSGDLHFGS) is the 'HIGH' region element. Residues Cys105, Cys107, Tyr119, and Cys123 each contribute to the Zn(2+) site. Positions 176 and 194 each coordinate L-glutamate. Residues 232–236 (KLSKQ) carry the 'KMSKS' region motif. An ATP-binding site is contributed by Lys235.

Belongs to the class-I aminoacyl-tRNA synthetase family. GluQ subfamily. Zn(2+) serves as cofactor.

Catalyzes the tRNA-independent activation of glutamate in presence of ATP and the subsequent transfer of glutamate onto a tRNA(Asp). Glutamate is transferred on the 2-amino-5-(4,5-dihydroxy-2-cyclopenten-1-yl) moiety of the queuosine in the wobble position of the QUC anticodon. This chain is Glutamyl-Q tRNA(Asp) synthetase, found in Photorhabdus laumondii subsp. laumondii (strain DSM 15139 / CIP 105565 / TT01) (Photorhabdus luminescens subsp. laumondii).